Consider the following 152-residue polypeptide: UPF0178 protein YaiI (152 aa).

It belongs to the UPF0178 family.

This is UPF0178 protein YaiI from Escherichia coli O81 (strain ED1a).